A 546-amino-acid chain; its full sequence is Chaperonin GroEL (546 aa).

ATP contacts are provided by residues 30 to 33, Lys-51, 87 to 91, Gly-415, 479 to 481, and Asp-495; these read TLGP, DGTTT, and NAA. A disordered region spans residues 526–546; it reads KKGDSAPAGGGMGDMGGMGMM. The span at 533 to 546 shows a compositional bias: gly residues; the sequence is AGGGMGDMGGMGMM.

It belongs to the chaperonin (HSP60) family. Forms a cylinder of 14 subunits composed of two heptameric rings stacked back-to-back. Interacts with the co-chaperonin GroES.

The protein resides in the cytoplasm. It catalyses the reaction ATP + H2O + a folded polypeptide = ADP + phosphate + an unfolded polypeptide.. Its function is as follows. Together with its co-chaperonin GroES, plays an essential role in assisting protein folding. The GroEL-GroES system forms a nano-cage that allows encapsulation of the non-native substrate proteins and provides a physical environment optimized to promote and accelerate protein folding. The chain is Chaperonin GroEL from Thioalkalivibrio sulfidiphilus (strain HL-EbGR7).